Consider the following 587-residue polypeptide: Urease subunit alpha (587 aa).

The Urease domain maps to 134–572; the sequence is GGIDTHVHFI…LPLAQRYLYT (439 aa). Positions 139, 141, and 222 each coordinate Ni(2+). Position 222 is an N6-carboxylysine (K222). H224 contacts substrate. Residues H251 and H277 each contribute to the Ni(2+) site. H325 (proton donor) is an active-site residue. Residue D365 coordinates Ni(2+).

The protein belongs to the metallo-dependent hydrolases superfamily. Urease alpha subunit family. As to quaternary structure, heterotrimer of UreA (gamma), UreB (beta) and UreC (alpha) subunits. Three heterotrimers associate to form the active enzyme. Requires Ni cation as cofactor. Carboxylation allows a single lysine to coordinate two nickel ions.

It localises to the cytoplasm. It catalyses the reaction urea + 2 H2O + H(+) = hydrogencarbonate + 2 NH4(+). The protein operates within nitrogen metabolism; urea degradation; CO(2) and NH(3) from urea (urease route): step 1/1. This chain is Urease subunit alpha, found in Clostridium perfringens.